The sequence spans 214 residues: MESENMDSENMKTENMESQNVDFESVSSVTALEALSKLLNPEEEDDSDYGQTNGLSTIGAMGPGNIGPPQIEELKVIPETSEENNEDIWNSEEIPEGAEYDDMWDVREIPEYEIIFRQQVGTEDIFLGLSKKDSSTGCCSELVAKIKLPNTNPSDIQIDIQETILDLRTPQKKLLITLPELVECTSAKAFYIPETETLEITMTMKRELDIANFF.

2 disordered regions span residues 1–22 (MESE…QNVD) and 34–68 (ALSK…NIGP).

Belongs to the PIH1 family. As to quaternary structure, interacts with HSPA1A/B and HSP90AA1. Interacts with DNAAF2 and DNAAF4. Interacts wuth DNAI2. Expressed in testis, small intestine, prostate, adrenal gland, spleen, lung, bladder, breast and ovary. Expressed in ciliated epithelial cells.

It localises to the cytoplasm. It is found in the golgi apparatus. Its subcellular location is the trans-Golgi network. Its function is as follows. Plays a role in cytoplasmic pre-assembly of axonemal dynein. The chain is Dynein axonemal assembly factor 6 from Homo sapiens (Human).